Consider the following 938-residue polypeptide: Microperfuranone synthase (938 aa).

Residues 44–445 form an adenylation (A) domain region; sequence TSTRISYAEL…AGRTKDTIIV (402 aa). Residues 579–655 form the Carrier domain; it reads SDSERAVQKA…AIARSIDSSR (77 aa). Residues 581 to 652 are thiolation and peptide carrier (T) domain; it reads SERAVQKALV…TPGAIARSID (72 aa). At serine 613 the chain carries O-(pantetheine 4'-phosphoryl)serine. Residues 676–923 form a thioesterase (TE) domain region; the sequence is PLFCIHPGSG…AKMLNREHIA (248 aa). Serine 746 is a catalytic residue.

It belongs to the ATP-dependent AMP-binding enzyme family.

Its pathway is secondary metabolite biosynthesis. Microperfuranone synthase is the only protein required for the biosynthesis of the secondary metabolite microperfuranone from phenylpyruvic acid (PPA). Several steps for the microperfuranione biosynthesis have been proposed. These steps include the activation of PPA, by the micA adenylation (A) domain to AMP-phenylpyruvic acid followed by loading of the PPA unit to the thiolation and peptide carrier (T) domain and eventually transferring to the thioesterase (TE) domain. After loading another PPA unit onto the T domain, aldol condensation establishes the carbon-carbon bond between the alpha- and beta-carbon of the two PPA units. Sulfur-assisted furan ring formation, TE domain mediated hydrolysis, decarboxylation, and keto-enol tautomerization would generate microperfuranone attached to the T domain. Finally, microperfuranone is released by the TE domain. This is Microperfuranone synthase from Emericella nidulans (strain FGSC A4 / ATCC 38163 / CBS 112.46 / NRRL 194 / M139) (Aspergillus nidulans).